The chain runs to 410 residues: Benzene 1,2-dioxygenase system ferredoxin--NAD(+) reductase subunit (410 aa).

Residue 4-35 (HVAIIGNGVAGFTTAQALRAEGYEGRISLIGE) coordinates FAD. Residue 145 to 173 (RLLIVGGGLIGCEVATTARKLGLSVTILE) coordinates NAD(+).

It belongs to the bacterial ring-hydroxylating dioxygenase ferredoxin reductase family. As to quaternary structure, this dioxygenase system consists of four proteins: the two subunits of the hydroxylase component (BedC1 and BedC2), a ferredoxin (BedB) and a ferredoxin reductase (BedA). FAD is required as a cofactor.

The enzyme catalyses 2 reduced [2Fe-2S]-[ferredoxin] + NAD(+) + H(+) = 2 oxidized [2Fe-2S]-[ferredoxin] + NADH. It participates in aromatic compound metabolism; benzene degradation; catechol from benzene: step 1/2. Functionally, part of the electron transfer component of benzene 1,2-dioxygenase, transfers electrons from ferredoxin to NADH. The protein is Benzene 1,2-dioxygenase system ferredoxin--NAD(+) reductase subunit (bedA) of Pseudomonas putida (Arthrobacter siderocapsulatus).